The primary structure comprises 184 residues: Photosystem I assembly protein Ycf4 (184 aa).

The next 2 helical transmembrane spans lie at 19–39 (ISNF…LLVG) and 57–77 (IVFF…LFIS).

This sequence belongs to the Ycf4 family.

The protein localises to the plastid. It is found in the chloroplast thylakoid membrane. In terms of biological role, seems to be required for the assembly of the photosystem I complex. This Nymphaea alba (White water-lily) protein is Photosystem I assembly protein Ycf4.